A 499-amino-acid polypeptide reads, in one-letter code: MCCVCGEQSPDLKNGLQKQSRSARRSASKKWRYQMNSFHYFVIFASGSLFSGLMFGLLNYAPKYVLLPTRSAPHHLPDGKFLQISDEARVMEPYFPAVRMAGRLGDGNNGSGKIRTEPHDTNEQEALSSLKVAIEMKTMGKDDKAARLFQHALALSPKHPEILTKYGEFLEHNQQDVVRADHYYYQALTVNPSHSEALANRQRTAQIVEHLDQKRFERLDQKRDALSSVSDTNMALKRAEKEAYIQHIYHSVGIEGNTMSLAQTRSILETRMAVDGKSIDEHNEILGLDAAMKYINATLVNKNDFITLKDILEIHRRVLGHVDPIEGGEFRRSQVYVGGHVPPGPGDLSILMNHFESWLNSKQAFLFHPVKYAAMAHYKLVHIHPFSDGNGRTSRLLMNTLLMRAGYPPVIIQKQHRHKYYDYLQVANEGDIRPFVRFIADCTERTLDLYLWATSELSHPVPLLAQETMPDGVPLINSFEKESTIEGSGAGEAIRIGTI.

Residues 38–58 (FHYFVIFASGSLFSGLMFGLL) traverse the membrane as a helical segment. TPR repeat units lie at residues 126-159 (ALSSLKVAIEMKTMGKDDKAARLFQHALALSPKH) and 160-194 (PEILTKYGEFLEHNQQDVVRADHYYYQALTVNPSH). The Inhibitory (S/T)XXXE(G/N) motif motif lies at 251-256 (SVGIEG). ATP is bound by residues Glu255 and 337–340 (VGGH). The region spanning 306–441 (ITLKDILEIH…IRPFVRFIAD (136 aa)) is the Fido domain. Residue His384 is part of the active site. ATP contacts are provided by residues 388-395 (DGNGRTSR), 420-421 (YY), and Asn428.

It belongs to the fic family. As to quaternary structure, homodimer.

It is found in the membrane. It catalyses the reaction L-tyrosyl-[protein] + ATP = O-(5'-adenylyl)-L-tyrosyl-[protein] + diphosphate. It carries out the reaction L-threonyl-[protein] + ATP = 3-O-(5'-adenylyl)-L-threonyl-[protein] + diphosphate. The catalysed reaction is 3-O-(5'-adenylyl)-L-threonyl-[protein] + H2O = L-threonyl-[protein] + AMP + H(+). The side chain of Glu-255 determines which of the two opposing activities (AMPylase or de-AMPylase) will take place. In response to endoplasmic reticulum stress, mediates de-AMPylase activity. Adenylyltransferase activity is inhibited by the inhibitory helix present at the N-terminus: Glu-255 binds ATP and competes with ATP-binding at Arg-395, thereby preventing adenylyltransferase activity. In unstressed cells, disengagement of Glu-255 promotes adenylyltransferase activity. Activation dissociates ATP-binding from Glu-255, allowing ordered binding of the entire ATP moiety with the alpha-phosphate in an orientation that is productive for accepting an incoming target hydroxyl side chain. Its function is as follows. Protein that can both mediate the addition of adenosine 5'-monophosphate (AMP) to specific residues of target proteins (AMPylation), and the removal of the same modification from target proteins (de-AMPylation), depending on the context. The side chain of Glu-255 determines which of the two opposing activities (AMPylase or de-AMPylase) will take place. Acts as a key regulator of the unfolded protein response (UPR) by mediating AMPylation or de-AMPylation of Hsc70-3/BiP. In unstressed cells, acts as an adenylyltransferase by mediating AMPylation of Hsc70-3/BiP at 'Thr-518', thereby inactivating it. In response to endoplasmic reticulum stress, acts as a phosphodiesterase by mediating removal of ATP (de-AMPylation) from Hsc70-3/BiP at 'Thr-518', leading to restore HSPA5/BiP activity. This Aedes aegypti (Yellowfever mosquito) protein is Protein adenylyltransferase Fic.